We begin with the raw amino-acid sequence, 264 residues long: uncharacterized protein (264 aa).

Residues 1 to 22 (MIHSKKLTLGICLVLLIILIGG) form the signal peptide. C23 carries the N-palmitoyl cysteine lipid modification. A lipid anchor (S-diacylglycerol cysteine) is attached at C23.

The protein belongs to the staphylococcal tandem lipoprotein family.

The protein localises to the cell membrane. This is an uncharacterized protein from Staphylococcus aureus (strain N315).